We begin with the raw amino-acid sequence, 206 residues long: MIKVLDARFVTTAVEPKGYPTDHTAEVAFVGRSNVGKSSMINALTGRRKLVRVSNTPGRTRTLNFFDVDLERGGVRHQIRLADLPGYGFAKASKADKAQWEKMITTYLEKRHRLEAVVSIVDVEVGPTPDDLTTLDYLQAHNRRVLVVATKVDRLTKARLKPRLVELSKLMDLPLEVILPFSSTEKLGVDEVWGALLDTFGKSARV.

Positions 23-202 (HTAEVAFVGR…WGALLDTFGK (180 aa)) constitute an EngB-type G domain. GTP contacts are provided by residues 31 to 38 (GRSNVGKS), 58 to 62 (GRTRT), 83 to 86 (DLPG), 150 to 153 (TKVD), and 181 to 183 (FSS). Residues serine 38 and threonine 60 each contribute to the Mg(2+) site.

This sequence belongs to the TRAFAC class TrmE-Era-EngA-EngB-Septin-like GTPase superfamily. EngB GTPase family. Requires Mg(2+) as cofactor.

Necessary for normal cell division and for the maintenance of normal septation. This is Probable GTP-binding protein EngB from Myxococcus xanthus (strain DK1622).